Here is a 287-residue protein sequence, read N- to C-terminus: Glycine--tRNA ligase alpha subunit (287 aa).

This sequence belongs to the class-II aminoacyl-tRNA synthetase family. In terms of assembly, tetramer of two alpha and two beta subunits.

It is found in the cytoplasm. It carries out the reaction tRNA(Gly) + glycine + ATP = glycyl-tRNA(Gly) + AMP + diphosphate. The polypeptide is Glycine--tRNA ligase alpha subunit (Campylobacter curvus (strain 525.92)).